We begin with the raw amino-acid sequence, 291 residues long: Small ribosomal subunit biogenesis GTPase RsgA 1 (291 aa).

The 159-residue stretch at glutamate 63–isoleucine 221 folds into the CP-type G domain. GTP contacts are provided by residues serine 112–aspartate 115 and glycine 164–threonine 172. The Zn(2+) site is built by cysteine 245, cysteine 250, histidine 252, and cysteine 258.

The protein belongs to the TRAFAC class YlqF/YawG GTPase family. RsgA subfamily. In terms of assembly, monomer. Associates with 30S ribosomal subunit, binds 16S rRNA. It depends on Zn(2+) as a cofactor.

It is found in the cytoplasm. Its function is as follows. One of several proteins that assist in the late maturation steps of the functional core of the 30S ribosomal subunit. Helps release RbfA from mature subunits. May play a role in the assembly of ribosomal proteins into the subunit. Circularly permuted GTPase that catalyzes slow GTP hydrolysis, GTPase activity is stimulated by the 30S ribosomal subunit. In Listeria monocytogenes serotype 4b (strain F2365), this protein is Small ribosomal subunit biogenesis GTPase RsgA 1.